A 184-amino-acid polypeptide reads, in one-letter code: MYVIAGLGNPGREYEGTRHNVGFMVIDELAKKLGMNVTKLKFKSLVGEGNFKGEKIILLKPQTFVNSSGEALYDAVNFYKIPLENVIVIYDDKDLDVGKIRIRKKGSSGGHNGMNSIIYLLNSEEFPRVRIGIGKPQKDLVSHVLGKFEESEKKLIDEAVIKAADAVIDIIENGIEHAMSKFNG.

Tyr14 contacts tRNA. His19 functions as the Proton acceptor in the catalytic mechanism. 3 residues coordinate tRNA: Phe64, Asn66, and Asn112.

The protein belongs to the PTH family. As to quaternary structure, monomer.

It localises to the cytoplasm. The enzyme catalyses an N-acyl-L-alpha-aminoacyl-tRNA + H2O = an N-acyl-L-amino acid + a tRNA + H(+). Functionally, hydrolyzes ribosome-free peptidyl-tRNAs (with 1 or more amino acids incorporated), which drop off the ribosome during protein synthesis, or as a result of ribosome stalling. In terms of biological role, catalyzes the release of premature peptidyl moieties from peptidyl-tRNA molecules trapped in stalled 50S ribosomal subunits, and thus maintains levels of free tRNAs and 50S ribosomes. This Thermoanaerobacter pseudethanolicus (strain ATCC 33223 / 39E) (Clostridium thermohydrosulfuricum) protein is Peptidyl-tRNA hydrolase.